A 344-amino-acid chain; its full sequence is 5,10-methenyltetrahydromethanopterin hydrogenase (344 aa).

The protein belongs to the HMD family. Homotetramer.

The enzyme catalyses 5,10-methenyl-5,6,7,8-tetrahydromethanopterin + H2 = 5,10-methylenetetrahydromethanopterin + H(+). It participates in one-carbon metabolism; methanogenesis from CO(2); 5,10-methylene-5,6,7,8-tetrahydromethanopterin from 5,10-methenyl-5,6,7,8-tetrahydromethanopterin (hydrogen route): step 1/1. Its activity is regulated as follows. Activity requires salt; 100 mM sodium or potassium salts of chloride, phosphate or sulfate are equally effective. Inactivated by O(2). Functionally, catalyzes the reversible reduction of methenyl-H(4)MPT(+) to methylene-H(4)MPT. The chain is 5,10-methenyltetrahydromethanopterin hydrogenase from Methanothermobacter marburgensis (strain ATCC BAA-927 / DSM 2133 / JCM 14651 / NBRC 100331 / OCM 82 / Marburg) (Methanobacterium thermoautotrophicum).